A 222-amino-acid chain; its full sequence is Pectate lyase A (222 aa).

An N-terminal signal peptide occupies residues 1-25 (MKKMLTLLLSAGLVASIFGVMPAAA).

The protein belongs to the polysaccharide lyase 3 family. Requires Ca(2+) as cofactor.

The protein localises to the secreted. It carries out the reaction Eliminative cleavage of (1-&gt;4)-alpha-D-galacturonan to give oligosaccharides with 4-deoxy-alpha-D-galact-4-enuronosyl groups at their non-reducing ends.. The catalysed reaction is Eliminative cleavage of (1-&gt;4)-alpha-D-galacturonan methyl ester to give oligosaccharides with 4-deoxy-6-O-methyl-alpha-D-galact-4-enuronosyl groups at their non-reducing ends.. The protein operates within glycan metabolism; pectin degradation; 2-dehydro-3-deoxy-D-gluconate from pectin: step 2/5. With respect to regulation, strongly inhibited by Ba(2+). To a lesser extent, is also inhibited by Sn(2+), Mg(2+) and Ag(+). Inhibited by EDTA in vitro. In terms of biological role, catalyzes the depolymerization of both polygalacturonate and pectins of methyl esterification degree from 22 to 89%, with an endo mode of action. In contrast to the majority of pectate lyases, displays high activity on highly methylated pectins. Is not able to cleave trigalacturonate. Does not degrade xylans and carboxymethylcellulose (CMC). The protein is Pectate lyase A (pelA) of Paenibacillus barcinonensis.